The following is a 122-amino-acid chain: MIQPQSRLKVADNTGAKEVMCIRVLGGSNRKFANIGDVIVCSVKDATPGGVVKKGDVVKAVIVRTRKGVRREDGTYIRFDDNAAVLIREDGTPRGTRIFGPVARELRDKDFMKIVSLAPEVL.

It belongs to the universal ribosomal protein uL14 family. In terms of assembly, part of the 50S ribosomal subunit. Forms a cluster with proteins L3 and L19. In the 70S ribosome, L14 and L19 interact and together make contacts with the 16S rRNA in bridges B5 and B8.

Its function is as follows. Binds to 23S rRNA. Forms part of two intersubunit bridges in the 70S ribosome. The chain is Large ribosomal subunit protein uL14 from Caldicellulosiruptor bescii (strain ATCC BAA-1888 / DSM 6725 / KCTC 15123 / Z-1320) (Anaerocellum thermophilum).